Here is a 177-residue protein sequence, read N- to C-terminus: Large ribosomal subunit protein uL6 (177 aa).

This sequence belongs to the universal ribosomal protein uL6 family. Part of the 50S ribosomal subunit.

Functionally, this protein binds to the 23S rRNA, and is important in its secondary structure. It is located near the subunit interface in the base of the L7/L12 stalk, and near the tRNA binding site of the peptidyltransferase center. This chain is Large ribosomal subunit protein uL6, found in Psychromonas ingrahamii (strain DSM 17664 / CCUG 51855 / 37).